The primary structure comprises 318 residues: DNA repair nuclease/redox regulator APEX1 (318 aa).

The necessary for interaction with YBX1, binding to RNA, association together with NPM1 to rRNA, endoribonuclease activity on abasic RNA and localization in the nucleoli stretch occupies residues 1 to 33 (MPKRGKKGAVAEDGDELKTEPEAKKSKTTAKKN). The segment at 1-60 (MPKRGKKGAVAEDGDELKTEPEAKKSKTTAKKNDKEAAGEGPALYEDPPDQKTSPSGKPA) is disordered. 2 positions are modified to N6-acetyllysine; by EP300: Lys-6 and Lys-7. The Nuclear localization signal (NLS) motif lies at 8–13 (GAVAED). Residues 16-38 (ELKTEPEAKKSKTTAKKNDKEAA) show a composition bias toward basic and acidic residues. A necessary for interaction with NPM1 and for efficient rRNA binding region spans residues 23 to 33 (AKKSKTTAKKN). N6-acetyllysine occurs at positions 27, 31, 32, and 35. Residue Ser-54 is modified to Phosphoserine. Residues 64–80 (ICSWNVDGLRAWIKKKG) carry the Nuclear export signal (NES) motif. The residue at position 65 (Cys-65) is an S-nitrosocysteine; alternate. Cys-65 and Cys-93 are joined by a disulfide. A Mg(2+)-binding site is contributed by Asp-70. Cys-93 carries the S-nitrosocysteine; alternate modification. Position 96 (Glu-96) interacts with Mg(2+). Residue Tyr-171 is part of the active site. Lys-197 bears the N6-acetyllysine mark. Mg(2+) is bound by residues Asp-210 and Asn-212. Asp-210 acts as the Proton donor/acceptor in catalysis. Residue Thr-233 is modified to Phosphothreonine; by CDK5. The mitochondrial targeting sequence (MTS) stretch occupies residues 289–318 (HSLLTALCDSKIRSKALGSDHCPITLYLAL). Asp-308 is a binding site for Mg(2+). Cys-310 carries the S-nitrosocysteine modification.

This sequence belongs to the DNA repair enzymes AP/ExoA family. Monomer. Homodimer; disulfide-linked. Component of the SET complex, composed of at least APEX1, SET, ANP32A, HMGB2, NME1 and TREX1. Associates with the dimer XRCC5/XRCC6 in a DNA-dependent manner. Interacts with SIRT1; the interaction is increased in the context of genotoxic stress. Interacts with HDAC1, HDAC2 and HDAC3; the interactions are not dependent on the APEX1 acetylation status. Interacts with XRCC1; the interaction is induced by SIRT1 and increased with the APEX1 acetylated form. Interacts with NPM1 (via N-terminal domain); the interaction is RNA-dependent and decreases in hydrogen peroxide-damaged cells. Interacts (via N-terminus) with YBX1 (via C-terminus); the interaction is increased in presence of APEX1 acetylated at Lys-6 and Lys-7. Interacts with HNRNPL; the interaction is DNA-dependent. Interacts (via N-terminus) with KPNA1 and KPNA2. Interacts with TXN; the interaction stimulates the FOS/JUN AP-1 complex DNA-binding activity in a redox-dependent manner. Interacts with GZMA, KRT8, MDM2, POLB, PRDX6, PRPF19, RPLP0, TOMM20 and WDR77. Binds to CDK5. Mg(2+) is required as a cofactor. The cofactor is Mn(2+). In terms of processing, phosphorylated. Phosphorylation by kinase PKC or casein kinase CK2 results in enhanced redox activity that stimulates binding of the FOS/JUN AP-1 complex to its cognate binding site. AP-endodeoxyribonuclease activity is not affected by CK2-mediated phosphorylation. Phosphorylation of Thr-233 by CDK5 in response to MPP(+)/MPTP (1-methyl-4-phenylpyridinium) reduces AP-endodeoxyribonuclease activity resulting in accumulation of DNA damage and contributing to neuronal death. Acetylated on Lys-6 and Lys-7. Acetylation is increased by the transcriptional coactivator EP300 acetyltransferase, genotoxic agents like H(2)O(2) and methyl methanesulfonate (MMS). Acetylation increases its binding affinity to the negative calcium response element (nCaRE) DNA promoter. The acetylated form induces a stronger binding of YBX1 to the Y-box sequence in the MDR1 promoter than the unacetylated form. Deacetylated on lysines. Lys-6 and Lys-7 are deacetylated by SIRT1. Post-translationally, cleaved at Lys-31 by granzyme A to create the mitochondrial form; leading in reduction of binding to DNA, AP endodeoxyribonuclease activity, redox activation of transcription factors and to enhanced cell death. Cleaved by granzyme K; leading to intracellular ROS accumulation and enhanced cell death after oxidative stress. In terms of processing, cys-69 and Cys-93 are nitrosylated in response to nitric oxide (NO) and lead to the exposure of the nuclear export signal (NES). Ubiquitinated by MDM2; leading to translocation to the cytoplasm and proteasomal degradation.

The protein resides in the nucleus. Its subcellular location is the nucleolus. It localises to the nucleus speckle. It is found in the endoplasmic reticulum. The protein localises to the cytoplasm. The protein resides in the mitochondrion. The enzyme catalyses a deoxyribonucleotide-2'-deoxyribose-5'-monophosphate-DNA + H2O = a 5'-end 2'-deoxyribose-5'-monophosphate-DNA + a 3'-end 2'-deoxyribonucleotide-DNA + H(+). The catalysed reaction is Exonucleolytic cleavage in the 3'- to 5'-direction to yield nucleoside 5'-phosphates.. It catalyses the reaction a 3'-end 2'-deoxyribonucleotide-3'-phosphoglycolate-DNA + H2O = 2-phosphoglycolate + a 3'-end 2'-deoxyribonucleotide-DNA + H(+). It carries out the reaction a 3'-end 2'-deoxyribonucleotide-8-oxoguanine-DNA + H2O = 8-oxo-dGMP + a 3'-end 2'-deoxyribonucleotide-DNA + H(+). With respect to regulation, NPM1 stimulates endodeoxyribonuclease activity on double-stranded DNA with AP sites, but inhibits endoribonuclease activity on single-stranded RNA containing AP sites. Its function is as follows. Multifunctional protein that plays a central role in the cellular response to oxidative stress. The two major activities of APEX1 are DNA repair and redox regulation of transcriptional factors. Functions as an apurinic/apyrimidinic (AP) endodeoxyribonuclease in the base excision repair (BER) pathway of DNA lesions induced by oxidative and alkylating agents. Initiates repair of AP sites in DNA by catalyzing hydrolytic incision of the phosphodiester backbone immediately adjacent to the damage, generating a single-strand break with 5'-deoxyribose phosphate and 3'-hydroxyl ends. Also incises at AP sites in the DNA strand of DNA/RNA hybrids, single-stranded DNA regions of R-loop structures, and single-stranded RNA molecules. Operates at switch sites of immunoglobulin (Ig) constant regions where it mediates Ig isotype class switch recombination. Processes AP sites induced by successive action of AICDA and UNG. Generates staggered nicks in opposite DNA strands resulting in the formation of double-strand DNA breaks that are finally resolved via non-homologous end joining repair pathway. Has 3'-5' exodeoxyribonuclease activity on mismatched deoxyribonucleotides at the 3' termini of nicked or gapped DNA molecules during short-patch BER. Possesses DNA 3' phosphodiesterase activity capable of removing lesions (such as phosphoglycolate and 8-oxoguanine) blocking the 3' side of DNA strand breaks. Also acts as an endoribonuclease involved in the control of single-stranded RNA metabolism. Plays a role in regulating MYC mRNA turnover by preferentially cleaving in between UA and CA dinucleotides of the MYC coding region determinant (CRD). In association with NMD1, plays a role in the rRNA quality control process during cell cycle progression. Acts as a loading factor for POLB onto non-incised AP sites in DNA and stimulates the 5'-terminal deoxyribose 5'-phosphate (dRp) excision activity of POLB. Exerts reversible nuclear redox activity to regulate DNA binding affinity and transcriptional activity of transcriptional factors by controlling the redox status of their DNA-binding domain, such as the FOS/JUN AP-1 complex after exposure to IR. Involved in calcium-dependent down-regulation of parathyroid hormone (PTH) expression by binding to negative calcium response elements (nCaREs). Together with HNRNPL or the dimer XRCC5/XRCC6, associates with nCaRE, acting as an activator of transcriptional repression. May also play a role in the epigenetic regulation of gene expression by participating in DNA demethylation. Stimulates the YBX1-mediated MDR1 promoter activity, when acetylated at Lys-6 and Lys-7, leading to drug resistance. Plays a role in protection from granzyme-mediated cellular repair leading to cell death. Binds DNA and RNA. Associates, together with YBX1, on the MDR1 promoter. Together with NPM1, associates with rRNA. The sequence is that of DNA repair nuclease/redox regulator APEX1 (APEX1) from Pongo pygmaeus (Bornean orangutan).